A 446-amino-acid polypeptide reads, in one-letter code: C4-dicarboxylate transport protein (446 aa).

9 helical membrane-spanning segments follow: residues 25–45, 58–78, 93–113, 159–179, 199–219, 236–256, 322–342, 370–390, and 400–420; these read VQVL…PAIG, LVKM…IASI, FAYF…VANV, ALTE…GLAL, VFFG…FGAM, LLIA…LGAV, IYMT…LSLG, AATL…ILGI, and LTNF…EKGL.

This sequence belongs to the dicarboxylate/amino acid:cation symporter (DAACS) (TC 2.A.23) family.

It localises to the cell inner membrane. Its function is as follows. Responsible for the transport of dicarboxylates such as succinate, fumarate, and malate from the periplasm across the membrane. This is C4-dicarboxylate transport protein from Sphingopyxis alaskensis (strain DSM 13593 / LMG 18877 / RB2256) (Sphingomonas alaskensis).